Consider the following 836-residue polypeptide: Neuroligin-2 (836 aa).

A signal peptide spans 1-14 (MWLLALCLVGLAGA). At 15 to 678 (QRGGGGPGGG…DSRDYSTELS (664 aa)) the chain is on the extracellular side. 2 N-linked (GlcNAc...) asparagine glycosylation sites follow: asparagine 98 and asparagine 136. 3 disulfide bridges follow: cysteine 106-cysteine 141, cysteine 317-cysteine 328, and cysteine 487-cysteine 521. Asparagine 522 is a glycosylation site (N-linked (GlcNAc...) asparagine). The tract at residues 623 to 661 (PPYATRWPPRTPGPGTSGTRRPPPPATLPPESDIDLGPR) is disordered. Residues 679–699 (VTVAVGASLLFLNILAFAALY) traverse the membrane as a helical segment. Residues 679–699 (VTVAVGASLLFLNILAFAALY) are required for interaction with LHFPL4. Residues 700–836 (YKRDRRQELR…LPHPHSTTRV (137 aa)) are Cytoplasmic-facing. Disordered stretches follow at residues 711-735 (RRLSPPGGSGSGVPGGGPLLPTAGR) and 791-836 (LLPS…TTRV). Serine 714 and serine 719 each carry phosphoserine. Residues 717–728 (GGSGSGVPGGGP) show a composition bias toward gly residues. A compositionally biased stretch (pro residues) spans 796–819 (LGPPPPPPPPSLHPFGPFPPPPPT). Over residues 824-836 (NNTLPHPHSTTRV) the composition is skewed to polar residues.

This sequence belongs to the type-B carboxylesterase/lipase family. As to quaternary structure, interacts with neurexins NRXN1, NRXN2 and NRXN3. Interaction with neurexins is mediated by heparan sulfate glycan modification on neurexin. Interacts (via its C-terminus) with DLG4/PSD-95 (via PDZ domain 3). Interacts with PATJ. Interacts with GPHN. Interacts with MDGA1 and MDGA2. Found in a complex with MAGI2 and IGSF9B, where it interacts with MAGI2 (via WW 1, WW 2 and PDZ 2 domains). Identified in a complex of 720 kDa composed of LHFPL4, NLGN2, GABRA1, GABRB2, GABRG2 and GABRB3. Interacts with LHFPL4; leading to mutual regulation of the protein level and synaptic clustering. Interacts with GABRA1. Detected on hippocampus neurons, especially at inhibitory synapses. Detected in retina, in the outer and inner plexiform layer. Detected in pancreas, in islet of Langerhans beta cells (at protein level). Expressed in brain, spinal cord and dorsal root ganglion. Detected in brain, and at lower levels in pancreas islet beta cells.

It localises to the cell membrane. The protein localises to the postsynaptic cell membrane. The protein resides in the presynaptic cell membrane. Transmembrane scaffolding protein involved in cell-cell interactions via its interactions with neurexin family members. Mediates cell-cell interactions both in neurons and in other types of cells, such as Langerhans beta cells. Plays a role in synapse function and synaptic signal transmission, especially via gamma-aminobutyric acid receptors (GABA(A) receptors). Functions by recruiting and clustering synaptic proteins. Promotes clustering of postsynaptic GABRG2 and GPHN. Promotes clustering of postsynaptic LHFPL4. Modulates signaling by inhibitory synapses, and thereby plays a role in controlling the ratio of signaling by excitatory and inhibitory synapses and information processing. Required for normal signal amplitude from inhibitory synapses, but is not essential for normal signal frequency. May promote the initial formation of synapses, but is not essential for this. In vitro, triggers the de novo formation of presynaptic structures. Mediates cell-cell interactions between Langerhans beta cells and modulates insulin secretion. The polypeptide is Neuroligin-2 (Nlgn2) (Rattus norvegicus (Rat)).